The chain runs to 116 residues: Vitelline membrane protein Vm32E (116 aa).

A signal peptide spans 1–17 (MKIVAFTLVAFVALAGA). One can recognise a VM domain in the interval 36–73 (GYPAPPCPTNYLFSCQPNLAPAPCAQEAPAYGSAGAYT).

The protein belongs to the vitelline membrane family.

The protein localises to the secreted. Major early eggshell protein. In Drosophila santomea (Fruit fly), this protein is Vitelline membrane protein Vm32E.